A 211-amino-acid chain; its full sequence is SAGA-associated factor 11 homolog 1 (211 aa).

An SGF11-type zinc finger spans residues Cys115–Cys136. A disordered region spans residues Arg149–Phe211. Residues Ser157–Thr166 are compositionally biased toward low complexity. A Phosphoserine modification is found at Ser187. Over residues Ser197–Phe211 the composition is skewed to low complexity.

It belongs to the SGF11 family. In terms of assembly, component of some SAGA transcription coactivator-HAT complexes, at least composed of Ada2b, not/nonstop, Pcaf/Gcn5, Sgf11 and Spt3. Within the SAGA complex, Sgf11, e(y)2, and not/nonstop form an additional subcomplex of SAGA called the DUB module (deubiquitination module). Interacts directly with not/nonstop. Interacts with the AMEX complex component xmas-2. Interacts with Cbp80; important for promoter recruitment of Sgf11 that is not associated with the DUB module.

Its subcellular location is the nucleus. It is found in the nucleoplasm. It localises to the cytoplasm. In terms of biological role, component of the transcription regulatory histone acetylation (HAT) complex SAGA, a multiprotein complex that activates transcription by remodeling chromatin and mediating histone acetylation and deubiquitination. Within the SAGA complex, participates in a subcomplex that specifically deubiquitinates histone H2B. The SAGA complex is recruited to specific gene promoters by activators, where it is required for transcription. Required for nuclear receptor-mediated transactivation. Binds independently on SAGA to promoters in an RNA-dependent manner. Binds to mRNA and is essential for total mRNA export from the nucleus. Required to counteract heterochromatin silencing. Controls the development of neuronal connectivity in visual system by being required for accurate axon targeting in the optic lobe. Required for expression of ecdysone-induced genes such as br/broad. This chain is SAGA-associated factor 11 homolog 1, found in Drosophila grimshawi (Hawaiian fruit fly).